Here is a 282-residue protein sequence, read N- to C-terminus: Pantothenate synthetase (282 aa).

Position 30–37 (30–37) interacts with ATP; sequence MGYLHEGH. Residue histidine 37 is the Proton donor of the active site. Position 61 (glutamine 61) interacts with (R)-pantoate. Position 61 (glutamine 61) interacts with beta-alanine. 147-150 serves as a coordination point for ATP; sequence GEKD. Glutamine 153 provides a ligand contact to (R)-pantoate. Residues isoleucine 176 and 184-187 contribute to the ATP site; that span reads KSSR.

The protein belongs to the pantothenate synthetase family. As to quaternary structure, homodimer.

The protein localises to the cytoplasm. It catalyses the reaction (R)-pantoate + beta-alanine + ATP = (R)-pantothenate + AMP + diphosphate + H(+). It participates in cofactor biosynthesis; (R)-pantothenate biosynthesis; (R)-pantothenate from (R)-pantoate and beta-alanine: step 1/1. Its function is as follows. Catalyzes the condensation of pantoate with beta-alanine in an ATP-dependent reaction via a pantoyl-adenylate intermediate. The chain is Pantothenate synthetase from Enterococcus faecalis (strain ATCC 700802 / V583).